A 288-amino-acid polypeptide reads, in one-letter code: Glucose-1-phosphate thymidylyltransferase (288 aa).

Gly8 contributes to the dTDP-alpha-D-glucose binding site. Residues Gly8, Gly11, Thr12, Arg13, Lys23, Gln24, Gln80, Gly85, and Asp108 each contribute to the dTTP site. Residues Lys23, Gln24, Gln80, Gly85, Asp108, Asn109, Gly143, Glu158, Lys159, Val169, and Asp222 each coordinate dTDP-alpha-D-glucose. Position 108 (Asp108) interacts with Mg(2+). Asp222 is a Mg(2+) binding site.

It belongs to the glucose-1-phosphate thymidylyltransferase family. Requires Mg(2+) as cofactor.

It catalyses the reaction dTTP + alpha-D-glucose 1-phosphate + H(+) = dTDP-alpha-D-glucose + diphosphate. The protein operates within carbohydrate biosynthesis; dTDP-L-rhamnose biosynthesis. Functionally, catalyzes the conversion of glucose-1-phosphate and dTTP to dTDP-glucose and pyrophosphate. Involved in the biosynthesis of the dTDP-L-rhamnose which is a component of the critical linker, D-N-acetylglucosamine-L-rhamnose disaccharide, which connects the galactan region of arabinogalactan to peptidoglycan via a phosphodiester linkage. The sequence is that of Glucose-1-phosphate thymidylyltransferase (rmlA) from Mycobacterium tuberculosis (strain CDC 1551 / Oshkosh).